The chain runs to 125 residues: Protein U2 (125 aa).

Belongs to the nanovirus U2 protein family.

This is Protein U2 (DNA-U2) from Milk vetch dwarf virus (isolate N) (MDV).